Reading from the N-terminus, the 482-residue chain is ATP synthase subunit beta (482 aa).

161-168 (GGAGVGKT) serves as a coordination point for ATP.

It belongs to the ATPase alpha/beta chains family. F-type ATPases have 2 components, CF(1) - the catalytic core - and CF(0) - the membrane proton channel. CF(1) has five subunits: alpha(3), beta(3), gamma(1), delta(1), epsilon(1). CF(0) has three main subunits: a(1), b(2) and c(9-12). The alpha and beta chains form an alternating ring which encloses part of the gamma chain. CF(1) is attached to CF(0) by a central stalk formed by the gamma and epsilon chains, while a peripheral stalk is formed by the delta and b chains.

It is found in the cell inner membrane. It catalyses the reaction ATP + H2O + 4 H(+)(in) = ADP + phosphate + 5 H(+)(out). In terms of biological role, produces ATP from ADP in the presence of a proton gradient across the membrane. The catalytic sites are hosted primarily by the beta subunits. In Anaeromyxobacter dehalogenans (strain 2CP-C), this protein is ATP synthase subunit beta.